We begin with the raw amino-acid sequence, 125 residues long: Fluoride-specific ion channel FluC (125 aa).

The next 4 helical transmembrane spans lie at 1 to 21, 32 to 52, 68 to 88, and 101 to 121; these read MIQA…RYFV, AFPW…GVFA, LLIT…LDAI, and IYIA…LAIM. Gly-75 and Thr-78 together coordinate Na(+).

Belongs to the fluoride channel Fluc/FEX (TC 1.A.43) family.

The protein resides in the cell inner membrane. The enzyme catalyses fluoride(in) = fluoride(out). Its activity is regulated as follows. Na(+) is not transported, but it plays an essential structural role and its presence is essential for fluoride channel function. Fluoride-specific ion channel. Important for reducing fluoride concentration in the cell, thus reducing its toxicity. This Rhizobium etli (strain ATCC 51251 / DSM 11541 / JCM 21823 / NBRC 15573 / CFN 42) protein is Fluoride-specific ion channel FluC.